Reading from the N-terminus, the 312-residue chain is Probable deoxyhypusine synthase (312 aa).

The Nucleophile role is filled by K285.

This sequence belongs to the deoxyhypusine synthase family. Requires NAD(+) as cofactor.

It catalyses the reaction [eIF5A protein]-L-lysine + spermidine = [eIF5A protein]-deoxyhypusine + propane-1,3-diamine. It functions in the pathway protein modification; eIF5A hypusination. In terms of biological role, catalyzes the NAD-dependent oxidative cleavage of spermidine and the subsequent transfer of the butylamine moiety of spermidine to the epsilon-amino group of a specific lysine residue of the eIF-5A precursor protein to form the intermediate deoxyhypusine residue. The polypeptide is Probable deoxyhypusine synthase (dys) (Saccharolobus solfataricus (strain ATCC 35092 / DSM 1617 / JCM 11322 / P2) (Sulfolobus solfataricus)).